The sequence spans 344 residues: Alkyl hydroperoxide reductase Rv2159c (344 aa).

The important for interaction with PknI stretch occupies residues 49-50; the sequence is AG. Cys-84 functions as the Cysteine sulfenic acid (-SOH) intermediate in the catalytic mechanism.

The protein belongs to the AhpD family. In terms of assembly, interacts with the serine/threonine-protein kinase PknI. The PknI-Rv2159c interaction is mediated through phosphorylation independent physical interaction.

Its activity is regulated as follows. Interaction with PknI increases the peroxidase activity by several folds. Functionally, involved in protection against oxidative stresses. May play a significant role in maintaining the cellular homeostasis during stress and virulence of M.tuberculosis. In vitro, catalyzes the decomposition of cumene hydroperoxide (CHP) to acetophenone. The chain is Alkyl hydroperoxide reductase Rv2159c from Mycobacterium tuberculosis (strain ATCC 25618 / H37Rv).